The sequence spans 502 residues: ATP synthase subunit alpha 1/3 (502 aa).

169–176 (GDRQTGKT) contributes to the ATP binding site.

The protein belongs to the ATPase alpha/beta chains family. As to quaternary structure, F-type ATPases have 2 components, CF(1) - the catalytic core - and CF(0) - the membrane proton channel. CF(1) has five subunits: alpha(3), beta(3), gamma(1), delta(1), epsilon(1). CF(0) has three main subunits: a(1), b(2) and c(9-12). The alpha and beta chains form an alternating ring which encloses part of the gamma chain. CF(1) is attached to CF(0) by a central stalk formed by the gamma and epsilon chains, while a peripheral stalk is formed by the delta and b chains.

It localises to the cell inner membrane. The enzyme catalyses ATP + H2O + 4 H(+)(in) = ADP + phosphate + 5 H(+)(out). In terms of biological role, produces ATP from ADP in the presence of a proton gradient across the membrane. The alpha chain is a regulatory subunit. This is ATP synthase subunit alpha 1/3 from Syntrophotalea carbinolica (strain DSM 2380 / NBRC 103641 / GraBd1) (Pelobacter carbinolicus).